Reading from the N-terminus, the 186-residue chain is ATP synthase subunit delta (186 aa).

Belongs to the ATPase delta chain family. F-type ATPases have 2 components, F(1) - the catalytic core - and F(0) - the membrane proton channel. F(1) has five subunits: alpha(3), beta(3), gamma(1), delta(1), epsilon(1). F(0) has three main subunits: a(1), b(2) and c(10-14). The alpha and beta chains form an alternating ring which encloses part of the gamma chain. F(1) is attached to F(0) by a central stalk formed by the gamma and epsilon chains, while a peripheral stalk is formed by the delta and b chains.

The protein resides in the cell inner membrane. Its function is as follows. F(1)F(0) ATP synthase produces ATP from ADP in the presence of a proton or sodium gradient. F-type ATPases consist of two structural domains, F(1) containing the extramembraneous catalytic core and F(0) containing the membrane proton channel, linked together by a central stalk and a peripheral stalk. During catalysis, ATP synthesis in the catalytic domain of F(1) is coupled via a rotary mechanism of the central stalk subunits to proton translocation. In terms of biological role, this protein is part of the stalk that links CF(0) to CF(1). It either transmits conformational changes from CF(0) to CF(1) or is implicated in proton conduction. The protein is ATP synthase subunit delta of Nitrobacter winogradskyi (strain ATCC 25391 / DSM 10237 / CIP 104748 / NCIMB 11846 / Nb-255).